The chain runs to 193 residues: Recombination protein RecR (193 aa).

The segment at 61–76 adopts a C4-type zinc-finger fold; it reads CTSCNALSESEVCEIC. Residues 84–170 form the Toprim domain; it reads SQLCMVLHPR…TFTKIAQGVP (87 aa).

Belongs to the RecR family.

May play a role in DNA repair. It seems to be involved in an RecBC-independent recombinational process of DNA repair. It may act with RecF and RecO. This chain is Recombination protein RecR, found in Helicobacter pylori (strain HPAG1).